The following is a 382-amino-acid chain: Bestrophin-6 (382 aa).

4 consecutive transmembrane segments (helical) span residues 29-49, 68-88, 231-251, and 265-285; these read WKLI…VLAI, FINF…TTIV, LAYP…CAFA, and VIHY…MGWL.

Belongs to the anion channel-forming bestrophin (TC 1.A.46) family. Calcium-sensitive chloride channel subfamily.

It localises to the membrane. This chain is Bestrophin-6 (best-6), found in Caenorhabditis elegans.